The following is a 68-amino-acid chain: Protein SlyX homolog (68 aa).

This sequence belongs to the SlyX family.

The polypeptide is Protein SlyX homolog (Brucella suis (strain ATCC 23445 / NCTC 10510)).